A 362-amino-acid chain; its full sequence is tRNA-specific 2-thiouridylase MnmA 3 (362 aa).

Residues Gly-11–Ser-18 and Met-37 each bind ATP. The active-site Nucleophile is Cys-91. Cys-91 and Cys-188 form a disulfide bridge. Gly-115 lines the ATP pocket. The tract at residues Lys-137 to Gln-139 is interaction with tRNA. Cys-188 (cysteine persulfide intermediate) is an active-site residue. The segment at Arg-296 to Tyr-297 is interaction with tRNA.

The protein belongs to the MnmA/TRMU family.

It localises to the cytoplasm. The catalysed reaction is S-sulfanyl-L-cysteinyl-[protein] + uridine(34) in tRNA + AH2 + ATP = 2-thiouridine(34) in tRNA + L-cysteinyl-[protein] + A + AMP + diphosphate + H(+). Catalyzes the 2-thiolation of uridine at the wobble position (U34) of tRNA, leading to the formation of s(2)U34. The sequence is that of tRNA-specific 2-thiouridylase MnmA 3 from Bacteroides fragilis (strain ATCC 25285 / DSM 2151 / CCUG 4856 / JCM 11019 / LMG 10263 / NCTC 9343 / Onslow / VPI 2553 / EN-2).